The following is a 284-amino-acid chain: NAD kinase (284 aa).

Catalysis depends on Asp70, which acts as the Proton acceptor. Residues 70–71 (DG), 139–140 (NE), Lys167, Asp169, Leu177, 180–185 (TAYNLS), and Gln236 contribute to the NAD(+) site.

It belongs to the NAD kinase family. It depends on a divalent metal cation as a cofactor.

Its subcellular location is the cytoplasm. The enzyme catalyses NAD(+) + ATP = ADP + NADP(+) + H(+). In terms of biological role, involved in the regulation of the intracellular balance of NAD and NADP, and is a key enzyme in the biosynthesis of NADP. Catalyzes specifically the phosphorylation on 2'-hydroxyl of the adenosine moiety of NAD to yield NADP. The polypeptide is NAD kinase (Helicobacter pylori (strain ATCC 700392 / 26695) (Campylobacter pylori)).